The primary structure comprises 287 residues: Elongation factor Ts (287 aa).

Residues 80–83 (TDFL) are involved in Mg(2+) ion dislocation from EF-Tu.

Belongs to the EF-Ts family.

The protein resides in the cytoplasm. Functionally, associates with the EF-Tu.GDP complex and induces the exchange of GDP to GTP. It remains bound to the aminoacyl-tRNA.EF-Tu.GTP complex up to the GTP hydrolysis stage on the ribosome. The polypeptide is Elongation factor Ts (Pseudomonas entomophila (strain L48)).